A 645-amino-acid chain; its full sequence is Nucleolar GTP-binding protein 1 (645 aa).

One can recognise an OBG-type G domain in the interval 168–340 (RTLLICGYPN…VRNKACEKLL (173 aa)). Residues 174 to 181 (GYPNVGKS), 220 to 224 (DTPGI), and 288 to 291 (NKTD) contribute to the GTP site. The interval 567–645 (GQNDSMASGS…KRGIGKSDFR (79 aa)) is disordered. The span at 612–624 (NRDARQGEADRHA) shows a compositional bias: basic and acidic residues.

The protein belongs to the TRAFAC class OBG-HflX-like GTPase superfamily. OBG GTPase family. NOG subfamily.

It localises to the nucleus. The protein resides in the nucleolus. Its function is as follows. Involved in the biogenesis of the 60S ribosomal subunit. The sequence is that of Nucleolar GTP-binding protein 1 (NOG1) from Candida glabrata (strain ATCC 2001 / BCRC 20586 / JCM 3761 / NBRC 0622 / NRRL Y-65 / CBS 138) (Yeast).